A 341-amino-acid polypeptide reads, in one-letter code: L-threonine 3-dehydrogenase (341 aa).

Zn(2+) is bound at residue Cys-38. Catalysis depends on charge relay system residues Thr-40 and His-43. Zn(2+)-binding residues include His-63, Glu-64, Cys-93, Cys-96, Cys-99, and Cys-107. NAD(+) is bound by residues Ile-175, Asp-195, Arg-200, 262–264 (LGI), and 286–287 (IY).

It belongs to the zinc-containing alcohol dehydrogenase family. Homotetramer. Zn(2+) is required as a cofactor.

Its subcellular location is the cytoplasm. The enzyme catalyses L-threonine + NAD(+) = (2S)-2-amino-3-oxobutanoate + NADH + H(+). The protein operates within amino-acid degradation; L-threonine degradation via oxydo-reductase pathway; glycine from L-threonine: step 1/2. Catalyzes the NAD(+)-dependent oxidation of L-threonine to 2-amino-3-ketobutyrate. The protein is L-threonine 3-dehydrogenase of Cronobacter sakazakii (strain ATCC BAA-894) (Enterobacter sakazakii).